We begin with the raw amino-acid sequence, 151 residues long: Putative olfactory receptor 13C6 (151 aa).

Over 1–27 (MVSANQTASVTEFILLGLSAHPKLEKT) the chain is Extracellular. An N-linked (GlcNAc...) asparagine glycan is attached at Asn-5. A helical membrane pass occupies residues 28-48 (FFVLILLMYLVILLGNGVLIL). Topologically, residues 49–61 (MTVSNSHLHMPMY) are cytoplasmic. The chain crosses the membrane as a helical span at residues 62–82 (FFLGNLSFLDICYTTSSVPLI). The Extracellular portion of the chain corresponds to 83 to 100 (LDSFLTPRKTISFSACAV). Residues 101 to 121 (QMFLSFAMGATECVLLSMMAF) form a helical membrane-spanning segment.

This sequence belongs to the G-protein coupled receptor 1 family.

It localises to the cell membrane. Functionally, odorant receptor. The protein is Putative olfactory receptor 13C6 of Homo sapiens (Human).